The following is a 278-amino-acid chain: Envelope glycoprotein L (278 aa).

Positions 1–30 are cleaved as a signal peptide; it reads MCRRPDCGFSFSPGPVILLWCCLLLPIVSS. Positions 43–256 constitute a gL betaherpesvirus-type domain; that stretch reads VPAECPELTR…DKYYAGLPPE (214 aa). Cys-154 and Cys-159 are oxidised to a cystine.

It belongs to the herpesviridae glycoprotein L (gL) family. Betaherpesvirinae gL subfamily. As to quaternary structure, interacts with glycoprotein H (gH); this interaction is necessary for the correct processing and cell surface expression of gH. Forms the envelope pentamer complex (PC) composed of gH, gL, UL128, UL130, and UL131A. The pentamer interacts with host NRP2. Forms the envelope trimer complex composed of gH, gL, and gO. The trimer interacts with host PDGFRA.

Its subcellular location is the virion membrane. It is found in the host cell membrane. The protein resides in the host Golgi apparatus. The protein localises to the host trans-Golgi network. In terms of biological role, the heterodimer glycoprotein H-glycoprotein L is required for the fusion of viral and plasma membranes leading to virus entry into the host cell. Acts as a functional inhibitor of gH and maintains gH in an inhibited form. Upon binding to host integrins, gL dissociates from gH leading to activation of the viral fusion glycoproteins gB and gH. In human cytomegalovirus, forms two distincts complexes to mediate viral entry, a trimer and a pentamer at the surface of the virion envelope. The gH-gL-gO trimer is required for infection in fibroblasts by interacting with host PDGFRA. The gH-gL-UL128-UL130-UL131A pentamer is essential for viral entry in epithelial, endothelial and myeloid cells via interaction with host NRP2. The polypeptide is Envelope glycoprotein L (Human cytomegalovirus (strain PT) (HHV-5)).